The primary structure comprises 436 residues: Glutamate-1-semialdehyde 2,1-aminomutase (436 aa).

Lys274 carries the post-translational modification N6-(pyridoxal phosphate)lysine.

This sequence belongs to the class-III pyridoxal-phosphate-dependent aminotransferase family. HemL subfamily. In terms of assembly, homodimer. Pyridoxal 5'-phosphate is required as a cofactor.

It localises to the cytoplasm. It carries out the reaction (S)-4-amino-5-oxopentanoate = 5-aminolevulinate. The protein operates within porphyrin-containing compound metabolism; protoporphyrin-IX biosynthesis; 5-aminolevulinate from L-glutamyl-tRNA(Glu): step 2/2. The protein is Glutamate-1-semialdehyde 2,1-aminomutase of Albidiferax ferrireducens (strain ATCC BAA-621 / DSM 15236 / T118) (Rhodoferax ferrireducens).